We begin with the raw amino-acid sequence, 1671 residues long: Hybrid signal transduction protein dokA (1671 aa).

Over residues 1–10 (MSSPHIELHS) the composition is skewed to basic and acidic residues. Disordered stretches follow at residues 1 to 27 (MSSP…ELTG), 42 to 89 (DDLN…DKND), 126 to 241 (QQQQ…RRSS), 365 to 451 (YSNN…NNEE), 579 to 603 (HNHN…SPFI), and 629 to 651 (SNSS…SSNA). Polar residues predominate over residues 11–27 (QRTLSPQPSSNNFELTG). Low complexity-rich tracts occupy residues 45 to 83 (NNNN…NNNN) and 126 to 167 (QQQQ…QQQE). Residues 168–179 (QEQEQEQEQEQE) show a composition bias toward acidic residues. The span at 367 to 449 (NNNNNTNTNN…NNNNNNNNNN (83 aa)) shows a compositional bias: low complexity. Polar residues predominate over residues 591–600 (TTQRASSTDS). Residues 1050-1276 (NISHELRTPC…TFWFAIKVSI (227 aa)) form the Histidine kinase domain. Residues 1519-1633 (YILVAEDNDI…RLQKTLSDWI (115 aa)) form the Response regulatory domain.

Under osmotic stress conditions, this protein undergoes phosphorylation at a serine residue in the kinase core, which is not due to an autophosphorylation of dokA. This is in contrast to the classic two-component paradigm, which predicts only histidine and aspartate phosphorylation.

Part of the osmoregulatory pathway which leads to the increase of intracellular cAMP concentration in response to hyperosmotic stress. Thought to negatively regulate the rdeA-regA pathway by acting as a phosphatase towards the HPt protein rdeA. Has probably no histidine kinase activity. This chain is Hybrid signal transduction protein dokA (dokA), found in Dictyostelium discoideum (Social amoeba).